A 215-amino-acid polypeptide reads, in one-letter code: Ribose-5-phosphate isomerase A (215 aa).

Substrate-binding positions include 26–29 (TGST), 79–82 (DGAD), and 92–95 (KGGG). The Proton acceptor role is filled by Glu-101. Lys-119 contacts substrate.

Belongs to the ribose 5-phosphate isomerase family. Homodimer.

It catalyses the reaction aldehydo-D-ribose 5-phosphate = D-ribulose 5-phosphate. The protein operates within carbohydrate degradation; pentose phosphate pathway; D-ribose 5-phosphate from D-ribulose 5-phosphate (non-oxidative stage): step 1/1. In terms of biological role, catalyzes the reversible conversion of ribose-5-phosphate to ribulose 5-phosphate. This is Ribose-5-phosphate isomerase A from Xanthomonas axonopodis pv. citri (strain 306).